The primary structure comprises 84 residues: MAHKKGASSTRNGRDSNAQRLGVKRFGGQVVNAGEILVRQRGTHFHPGSGVGRGKDDTLFALDAGAVEFGTHRGRKVVNIVPVA.

Residues 1-22 are disordered; it reads MAHKKGASSTRNGRDSNAQRLG. The segment covering 7 to 19 has biased composition (polar residues); the sequence is ASSTRNGRDSNAQ.

The protein belongs to the bacterial ribosomal protein bL27 family.

This Streptomyces avermitilis (strain ATCC 31267 / DSM 46492 / JCM 5070 / NBRC 14893 / NCIMB 12804 / NRRL 8165 / MA-4680) protein is Large ribosomal subunit protein bL27.